Reading from the N-terminus, the 191-residue chain is Guanylate kinase (191 aa).

One can recognise a Guanylate kinase-like domain in the interval Gly8–Val188. Gly15–Ser22 serves as a coordination point for ATP.

Belongs to the guanylate kinase family.

Its subcellular location is the cytoplasm. It carries out the reaction GMP + ATP = GDP + ADP. Its function is as follows. Essential for recycling GMP and indirectly, cGMP. The polypeptide is Guanylate kinase (Corynebacterium diphtheriae (strain ATCC 700971 / NCTC 13129 / Biotype gravis)).